A 505-amino-acid polypeptide reads, in one-letter code: NADH-quinone oxidoreductase subunit N (505 aa).

14 consecutive transmembrane segments (helical) span residues 20–40, 59–79, 83–103, 115–135, 137–157, 172–192, 220–240, 251–271, 285–305, 314–334, 342–362, 394–414, 431–451, and 481–501; these read ALAP…GDLF, ALAL…GGVF, GLAA…ALMS, GEYY…VSAG, AIVL…LVAL, FLMG…LYGL, AVVA…TVPF, APTT…FAVL, LWSD…NIAA, MLAY…AACT, AAYL…IIYL, LAAV…TAGF, ITVV…LGVA, and AVCL…LFWI.

It belongs to the complex I subunit 2 family. NDH-1 is composed of 14 different subunits. Subunits NuoA, H, J, K, L, M, N constitute the membrane sector of the complex.

It is found in the cell inner membrane. The enzyme catalyses a quinone + NADH + 5 H(+)(in) = a quinol + NAD(+) + 4 H(+)(out). Functionally, NDH-1 shuttles electrons from NADH, via FMN and iron-sulfur (Fe-S) centers, to quinones in the respiratory chain. The immediate electron acceptor for the enzyme in this species is believed to be ubiquinone. Couples the redox reaction to proton translocation (for every two electrons transferred, four hydrogen ions are translocated across the cytoplasmic membrane), and thus conserves the redox energy in a proton gradient. The protein is NADH-quinone oxidoreductase subunit N of Desulfovibrio desulfuricans (strain ATCC 27774 / DSM 6949 / MB).